The primary structure comprises 382 residues: Histidinol-phosphate aminotransferase (382 aa).

An N6-(pyridoxal phosphate)lysine modification is found at Lys-215. Positions 363–382 (NIDNQSKTHSQTSSIRKGTI) are disordered.

It belongs to the class-II pyridoxal-phosphate-dependent aminotransferase family. Histidinol-phosphate aminotransferase subfamily. As to quaternary structure, homodimer. It depends on pyridoxal 5'-phosphate as a cofactor.

The enzyme catalyses L-histidinol phosphate + 2-oxoglutarate = 3-(imidazol-4-yl)-2-oxopropyl phosphate + L-glutamate. It functions in the pathway amino-acid biosynthesis; L-histidine biosynthesis; L-histidine from 5-phospho-alpha-D-ribose 1-diphosphate: step 7/9. The polypeptide is Histidinol-phosphate aminotransferase (Yersinia pseudotuberculosis serotype O:1b (strain IP 31758)).